A 562-amino-acid chain; its full sequence is Protein FAM83D-B (562 aa).

A disordered region spans residues 424–472 (ITTQTTETSQCTTQTPAPTSSVARLSNSSNSSSSSFSSASTTSTGSNCS). Positions 425 to 472 (TTQTTETSQCTTQTPAPTSSVARLSNSSNSSSSSFSSASTTSTGSNCS) are enriched in low complexity.

The protein belongs to the FAM83 family.

It is found in the cytoplasm. Its subcellular location is the cytoskeleton. The protein resides in the spindle. The protein localises to the spindle pole. Its function is as follows. May regulate cell proliferation, growth, migration and epithelial to mesenchymal transition. May also be important for proper chromosome congression and alignment during mitosis. This is Protein FAM83D-B from Xenopus laevis (African clawed frog).